The sequence spans 164 residues: Large ribosomal subunit protein uL11 (164 aa).

It belongs to the universal ribosomal protein uL11 family. In terms of assembly, part of the ribosomal stalk of the 50S ribosomal subunit. Interacts with L10 and the large rRNA to form the base of the stalk. L10 forms an elongated spine to which L12 dimers bind in a sequential fashion forming a multimeric L10(L12)X complex.

Forms part of the ribosomal stalk which helps the ribosome interact with GTP-bound translation factors. The chain is Large ribosomal subunit protein uL11 from Pyrococcus abyssi (strain GE5 / Orsay).